A 257-amino-acid chain; its full sequence is High-affinity copper transporter ctrC (257 aa).

The next 2 membrane-spanning stretches (helical) occupy residues 79–99 (RGMFAGSCIGVICLVICLEFL) and 202–222 (YFNGYIIICIFIGAFLGSFIF).

Belongs to the copper transporter (Ctr) (TC 1.A.56) family. SLC31A subfamily.

The protein localises to the cell membrane. It carries out the reaction Cu(2+)(in) = Cu(2+)(out). High-affinity copper transporter of plasma membrane that mediates copper uptake under low copper conditions. The mechanism driving the transmembrane transport of copper has still to be determined. Acts as a potential virulence factor. The chain is High-affinity copper transporter ctrC from Aspergillus fumigatus (strain ATCC MYA-4609 / CBS 101355 / FGSC A1100 / Af293) (Neosartorya fumigata).